We begin with the raw amino-acid sequence, 450 residues long: Phosphoglucosamine mutase (450 aa).

The active-site Phosphoserine intermediate is serine 102. Mg(2+)-binding residues include serine 102, aspartate 242, aspartate 244, and aspartate 246. Position 102 is a phosphoserine (serine 102).

It belongs to the phosphohexose mutase family. The cofactor is Mg(2+). In terms of processing, activated by phosphorylation.

The catalysed reaction is alpha-D-glucosamine 1-phosphate = D-glucosamine 6-phosphate. Its function is as follows. Catalyzes the conversion of glucosamine-6-phosphate to glucosamine-1-phosphate. This chain is Phosphoglucosamine mutase, found in Lachnospira eligens (strain ATCC 27750 / DSM 3376 / VPI C15-48 / C15-B4) (Eubacterium eligens).